The sequence spans 543 residues: CTP synthase (543 aa).

Positions 1-265 (MTNYIFVTGG…DQLVVDRFGL (265 aa)) are amidoligase domain. Ser-13 is a CTP binding site. Residue Ser-13 participates in UTP binding. Residues 14 to 19 (SLGKGI) and Asp-71 each bind ATP. Residues Asp-71 and Glu-139 each contribute to the Mg(2+) site. Residues 146 to 148 (DIE), 186 to 191 (KTKPTQ), and Lys-222 contribute to the CTP site. UTP contacts are provided by residues 186–191 (KTKPTQ) and Lys-222. 238 to 240 (KDV) serves as a coordination point for ATP. The Glutamine amidotransferase type-1 domain maps to 290-541 (NIGMIGKYVE…VAAAGKYQKE (252 aa)). Gly-351 provides a ligand contact to L-glutamine. Cys-378 functions as the Nucleophile; for glutamine hydrolysis in the catalytic mechanism. L-glutamine-binding positions include 379–382 (LGMQ), Glu-402, and Arg-469. Residues His-514 and Glu-516 contribute to the active site.

The protein belongs to the CTP synthase family. Homotetramer.

The enzyme catalyses UTP + L-glutamine + ATP + H2O = CTP + L-glutamate + ADP + phosphate + 2 H(+). The catalysed reaction is L-glutamine + H2O = L-glutamate + NH4(+). It catalyses the reaction UTP + NH4(+) + ATP = CTP + ADP + phosphate + 2 H(+). The protein operates within pyrimidine metabolism; CTP biosynthesis via de novo pathway; CTP from UDP: step 2/2. Allosterically activated by GTP, when glutamine is the substrate; GTP has no effect on the reaction when ammonia is the substrate. The allosteric effector GTP functions by stabilizing the protein conformation that binds the tetrahedral intermediate(s) formed during glutamine hydrolysis. Inhibited by the product CTP, via allosteric rather than competitive inhibition. Its function is as follows. Catalyzes the ATP-dependent amination of UTP to CTP with either L-glutamine or ammonia as the source of nitrogen. Regulates intracellular CTP levels through interactions with the four ribonucleotide triphosphates. The protein is CTP synthase of Alteromonas mediterranea (strain DSM 17117 / CIP 110805 / LMG 28347 / Deep ecotype).